The primary structure comprises 325 residues: Phage-like element PBSX protein XkdQ (325 aa).

It to B.subtilis YqbQ.

The sequence is that of Phage-like element PBSX protein XkdQ (xkdQ) from Bacillus subtilis (strain 168).